Consider the following 555-residue polypeptide: Formate--tetrahydrofolate ligase (555 aa).

65 to 72 (TPAGEGKT) is an ATP binding site.

This sequence belongs to the formate--tetrahydrofolate ligase family.

The catalysed reaction is (6S)-5,6,7,8-tetrahydrofolate + formate + ATP = (6R)-10-formyltetrahydrofolate + ADP + phosphate. The protein operates within one-carbon metabolism; tetrahydrofolate interconversion. This Syntrophomonas wolfei subsp. wolfei (strain DSM 2245B / Goettingen) protein is Formate--tetrahydrofolate ligase.